Reading from the N-terminus, the 307-residue chain is F-box protein PP2-B7 (307 aa).

The 47-residue stretch at 37–83 (PLSLGDLPEECISLIISFTSPRDACVFALVSKTFESAVQSDIVWEKF) folds into the F-box domain.

The protein is F-box protein PP2-B7 (PP2B7) of Arabidopsis thaliana (Mouse-ear cress).